Reading from the N-terminus, the 192-residue chain is Cytochrome b-245 light chain (192 aa).

At 2–7 (GQIEWA) the chain is on the cytoplasmic side. Residues 8 to 30 (MWANEQALASGLILITGGIVATA) traverse the membrane as a helical segment. The Extracellular segment spans residues 31 to 35 (GQFAQ). The helical transmembrane segment at 36-53 (WYLGAYSIAAGVLICLLE) threads the bilayer. The Cytoplasmic portion of the chain corresponds to 54-69 (YPRGKRSKGSTMERCG). An intramembrane segment occupies 70–80 (QKYLTRAVKVF). Residues 81 to 86 (GPLTSN) lie on the Cytoplasmic side of the membrane. The chain crosses the membrane as a helical span at residues 87 to 104 (YYIRAFLHLGLSVPAGFL). A topological domain (extracellular) is located at residue Leu-105. The chain crosses the membrane as a helical span at residues 106 to 126 (ATILGTACLAIASSIYLLAAI). Over 127-192 (HGEHWTPIET…NPMPVTDEVV (66 aa)) the chain is Cytoplasmic. The disordered stretch occupies residues 134–192 (IETKPKERPQVGGTIKQPPSNPPPRPPAEARKKPSEEEVAGVPGGGPQENPMPVTDEVV). Residue Thr-147 is modified to Phosphothreonine. Lys-149 is covalently cross-linked (Glycyl lysine isopeptide (Lys-Gly) (interchain with G-Cter in ubiquitin)). Phosphoserine is present on Ser-168.

It belongs to the p22phox family. In terms of assembly, component of the phagocyte NADPH oxidase core complex/cytochrome b558 complex, composed of CYBB (heavy chain (beta)) and CYBA (light chain (alpha)). Component of the phagocyte NADPH oxidase complex composed of an obligatory core heterodimer formed by the membrane proteins CYBA and CYBB and the cytosolic regulatory subunits NCF1/p47-phox, NCF2/p67-phox, NCF4/p40-phox and the small GTPase RAC1 or RAC2. Interacts with NCF1 (via SH3 domain). Interacts with SH3PXD2A. Interacts with DUOX1, DUOX2 and TPO. Interacts with NOX4; this interaction mediates superoxide generation. Interacts with calprotectin (S100A8/9). Interacts with GBP7. Interacts with NOXO1. Forms a heterodimer with NOX3 and is essential for activity and cell membrane localization of NOX3. Interacts with NOX1. Post-translationally, phosphorylation at Thr-147 enhances NADPH oxidase activity by promoting NCF1/p47-phox binding. In terms of processing, ubiquitinated at Lys-149 likely by RNF145.

It localises to the cell membrane. Functionally, subunit of NADPH oxidase complexes that is required for the NADPH oxidase activity that generates, in various cell types, superoxide from molecular oxygen utilizing NADPH as an electron donor. Subunit of the phagocyte NADPH oxidase complex that mediates the transfer of electrons from cytosolic NADPH to O2 to produce the superoxide anion (O2(-)). In the activated complex, electrons are first transferred from NADPH to flavin adenine dinucleotide (FAD) and subsequently transferred via two heme molecules to molecular oxygen, producing superoxide through an outer-sphere reaction. Activation of the NADPH oxidase complex is initiated by the assembly of cytosolic subunits of the NADPH oxidase complex with the core NADPH oxidase complex to form a complex at the plasma membrane or phagosomal membrane. This activation process is initiated by phosphorylation dependent binding of the cytosolic NCF1/p47-phox subunit to the C-terminus of CYBA/p22-phox. Aassociates with NOX3 to form a functional NADPH oxidase constitutively generating superoxide. This is Cytochrome b-245 light chain from Tursiops truncatus (Atlantic bottle-nosed dolphin).